Here is a 210-residue protein sequence, read N- to C-terminus: Thiamine-phosphate synthase (210 aa).

Residues 39 to 43 (QLREK) and N71 each bind 4-amino-2-methyl-5-(diphosphooxymethyl)pyrimidine. Residues D72 and D91 each coordinate Mg(2+). Residue S110 participates in 4-amino-2-methyl-5-(diphosphooxymethyl)pyrimidine binding. A 2-[(2R,5Z)-2-carboxy-4-methylthiazol-5(2H)-ylidene]ethyl phosphate-binding site is contributed by 134–136 (TPT). Position 137 (K137) interacts with 4-amino-2-methyl-5-(diphosphooxymethyl)pyrimidine. Residue G163 participates in 2-[(2R,5Z)-2-carboxy-4-methylthiazol-5(2H)-ylidene]ethyl phosphate binding.

It belongs to the thiamine-phosphate synthase family. Mg(2+) is required as a cofactor.

It carries out the reaction 2-[(2R,5Z)-2-carboxy-4-methylthiazol-5(2H)-ylidene]ethyl phosphate + 4-amino-2-methyl-5-(diphosphooxymethyl)pyrimidine + 2 H(+) = thiamine phosphate + CO2 + diphosphate. The catalysed reaction is 2-(2-carboxy-4-methylthiazol-5-yl)ethyl phosphate + 4-amino-2-methyl-5-(diphosphooxymethyl)pyrimidine + 2 H(+) = thiamine phosphate + CO2 + diphosphate. It catalyses the reaction 4-methyl-5-(2-phosphooxyethyl)-thiazole + 4-amino-2-methyl-5-(diphosphooxymethyl)pyrimidine + H(+) = thiamine phosphate + diphosphate. It participates in cofactor biosynthesis; thiamine diphosphate biosynthesis; thiamine phosphate from 4-amino-2-methyl-5-diphosphomethylpyrimidine and 4-methyl-5-(2-phosphoethyl)-thiazole: step 1/1. In terms of biological role, condenses 4-methyl-5-(beta-hydroxyethyl)thiazole monophosphate (THZ-P) and 2-methyl-4-amino-5-hydroxymethyl pyrimidine pyrophosphate (HMP-PP) to form thiamine monophosphate (TMP). This chain is Thiamine-phosphate synthase, found in Campylobacter jejuni (strain RM1221).